Consider the following 221-residue polypeptide: Extracellular superoxide dismutase [Cu-Zn] (221 aa).

An N-terminal signal peptide occupies residues 1-19 (MKTRVVLILALSVCIEAAS). N-linked (GlcNAc...) asparagine glycosylation is present at Asn56. Residues His70, His72, and His87 each coordinate Cu cation. An intrachain disulfide couples Cys81 to Cys170. Residues His87, His95, His104, and Asp107 each contribute to the Zn(2+) site. His144 serves as a coordination point for Cu cation.

The protein belongs to the Cu-Zn superoxide dismutase family. It depends on Cu cation as a cofactor. Requires Zn(2+) as cofactor. In terms of tissue distribution, isoform 2 is preferentially expressed in eggs.

It is found in the secreted. The protein localises to the extracellular space. Its subcellular location is the membrane. It carries out the reaction 2 superoxide + 2 H(+) = H2O2 + O2. Protects cells against oxidative stress by converting superoxide radicals to hydrogen peroxide. Oxidative stress is involved in various biological dysfunctions and senescence. The protein is Extracellular superoxide dismutase [Cu-Zn] (sod-4) of Caenorhabditis elegans.